The primary structure comprises 205 residues: MLSQDSNDDTEDVSLFDAEEETTNRPRKSKIRHPVASFFHLFFRVSAVVVYLLCELLSSSFIACMVTIILLLSCDFWAVKNVTGRLMVGLRWWNHIDEDGKSHWVFESRKSTPQDNKTISEAESRIFWLGLIACPVLWVIFAFSALFSFRVKWLAVVIMGVVLQGANLYGYIRCKVGSKKNLTSMATSYLGKQFLRQNTGDGQTS.

At Met1 the chain carries N-acetylmethionine. The segment covering 1 to 21 has biased composition (acidic residues); it reads MLSQDSNDDTEDVSLFDAEEE. The interval 1–27 is disordered; it reads MLSQDSNDDTEDVSLFDAEEETTNRPR. 4 helical membrane-spanning segments follow: residues 34–53, 54–72, 126–146, and 152–172; these read PVASFFHLFFRVSAVVVYLL, CELLSSSFIACMVTIILLL, IFWLGLIACPVLWVIFAFSAL, and KWLAVVIMGVVLQGANLYGYI.

It belongs to the TVP23 family.

The protein localises to the membrane. The chain is Golgi apparatus membrane protein TVP23 homolog B (Tvp23b) from Mus musculus (Mouse).